The following is a 252-amino-acid chain: Transcriptional regulatory protein HptR (252 aa).

The region spanning 3-118 (KVVICDDERI…QLEVILGRLV (116 aa)) is the Response regulatory domain. 4-aspartylphosphate is present on D55. Residues 153–250 (NQIVDQIKQS…QMSPSDYCKQ (98 aa)) enclose the HTH araC/xylS-type domain. DNA-binding regions (H-T-H motif) lie at residues 170-191 (SDLIQHIDVSESYAMRTFKDHV) and 217-240 (HYEIADKVGFSEYKMFSYHFKKYL).

In terms of processing, phosphorylated by HptS.

The protein localises to the cytoplasm. Member of the two-component regulatory system HptS/HptR that regulates genes involved in hexose phosphate transport system in response to changes in extracellular phosphate sources. Activates uhpT expression to facilitate glucose-6-phosphate/G6P utilization by directly binding to its promoter. Antagonizes CcpA-dependent transcription of a subset of CcpA-regulated genes involved in antibiotic susceptibility. The sequence is that of Transcriptional regulatory protein HptR (hptR) from Staphylococcus aureus (strain Mu50 / ATCC 700699).